The primary structure comprises 419 residues: UDP-N-acetylglucosamine 1-carboxyvinyltransferase (419 aa).

22–23 (KN) contacts phosphoenolpyruvate. Residue arginine 93 coordinates UDP-N-acetyl-alpha-D-glucosamine. Cysteine 117 acts as the Proton donor in catalysis. Residue cysteine 117 is modified to 2-(S-cysteinyl)pyruvic acid O-phosphothioketal. The UDP-N-acetyl-alpha-D-glucosamine site is built by aspartate 307 and isoleucine 329.

The protein belongs to the EPSP synthase family. MurA subfamily.

It localises to the cytoplasm. The catalysed reaction is phosphoenolpyruvate + UDP-N-acetyl-alpha-D-glucosamine = UDP-N-acetyl-3-O-(1-carboxyvinyl)-alpha-D-glucosamine + phosphate. Its pathway is cell wall biogenesis; peptidoglycan biosynthesis. Cell wall formation. Adds enolpyruvyl to UDP-N-acetylglucosamine. This is UDP-N-acetylglucosamine 1-carboxyvinyltransferase from Shewanella sp. (strain MR-7).